A 411-amino-acid chain; its full sequence is Serine--tRNA ligase (411 aa).

Residue 226–228 (TSE) participates in L-serine binding. 257-259 (RKE) serves as a coordination point for ATP. Glutamate 280 is an L-serine binding site. ATP is bound at residue 344–347 (EISS). Residue serine 379 participates in L-serine binding.

This sequence belongs to the class-II aminoacyl-tRNA synthetase family. Type-1 seryl-tRNA synthetase subfamily. Homodimer. The tRNA molecule binds across the dimer.

The protein localises to the cytoplasm. It catalyses the reaction tRNA(Ser) + L-serine + ATP = L-seryl-tRNA(Ser) + AMP + diphosphate + H(+). The enzyme catalyses tRNA(Sec) + L-serine + ATP = L-seryl-tRNA(Sec) + AMP + diphosphate + H(+). It functions in the pathway aminoacyl-tRNA biosynthesis; selenocysteinyl-tRNA(Sec) biosynthesis; L-seryl-tRNA(Sec) from L-serine and tRNA(Sec): step 1/1. Catalyzes the attachment of serine to tRNA(Ser). Is also able to aminoacylate tRNA(Sec) with serine, to form the misacylated tRNA L-seryl-tRNA(Sec), which will be further converted into selenocysteinyl-tRNA(Sec). In Campylobacter jejuni (strain RM1221), this protein is Serine--tRNA ligase.